We begin with the raw amino-acid sequence, 576 residues long: MISATNWVPRGFSSEFPEKYVLDDEEVERINQLAQLNLDDAKATLEEAEGESGVEDDAATGSSNKLKDQLDIDDDLKEYNLEEYDDEEIADNEGGKDVSMFPGLSNDSDVKFHEGEKGEDPYISLPNQEDSQEEKQELQVYPSDNLVLAARTEDDVSYLDIYVYDDGAGFHSSDIPVEEGDEADPDVARGLVRDPALYVHHDLMLPAFPLCVEWLDYKVGSNSEEAANYAAIGTFDPQIEIWNLDCVDKAFPDMILGEPLDNSMVSLKSKKKKKKSKTGHITTHHTDAVLSMAHNKYFRSVLASTSADHTVKLWDLNSGNAARSLASIHSNKNVSSSEWHMLNGSILLTGGYDSRVALTDVRISDESQMSKYWSAMAGEEIETVTFASENIILCGTDSGNVYSFDIRNNENRKPVWTLKAHDAGISTLCSNKFIPGMMSTGAMGEKTVKLWKFPLDDATNTKGPSMVLSRDFDVGNVLTSSFAPDIEVAGTMVIGGVNKVLKLWDVFTNRSVRKSFKSELENVQARAKEEAQKIGKSSRIARKYTSNDNPDTVITIDDQGEDEEEREGGDEHDDMA.

A disordered region spans residues 41–134 (AKATLEEAEG…LPNQEDSQEE (94 aa)). Acidic residues-rich tracts occupy residues 46 to 58 (EEAE…EDDA) and 71 to 91 (DIDD…EIAD). Serine 52 carries the phosphoserine modification. A compositionally biased stretch (basic and acidic residues) spans 108 to 120 (SDVKFHEGEKGED). Serine 131 is subject to Phosphoserine. WD repeat units lie at residues 207 to 252 (AFPL…KAFP), 284 to 324 (HHTD…AARS), 329 to 369 (HSNK…ESQM), 376 to 414 (MAGE…NRKP), 420 to 461 (AHDA…ATNT), and 472 to 514 (FDVG…SVRK). A disordered region spans residues 530–576 (EAQKIGKSSRIARKYTSNDNPDTVITIDDQGEDEEEREGGDEHDDMA). Positions 558–576 (DQGEDEEEREGGDEHDDMA) are enriched in acidic residues.

This sequence belongs to the WD repeat PWP1 family.

The protein is Periodic tryptophan protein 1 (PWP1) of Saccharomyces cerevisiae (strain ATCC 204508 / S288c) (Baker's yeast).